Reading from the N-terminus, the 562-residue chain is Adenylate kinase isoenzyme 5 (562 aa).

Adenylate kinase regions lie at residues 133 to 316 and 377 to 559; these read KIIL…VAVD and KIIF…TAID. 142 to 147 contacts ATP; sequence GSGKGT. The interval 162-193 is NMP 1; that stretch reads SVGELLRKKIHSASSNRKWSLIAKIITNGELA. Residues arginine 168, 191-193, 219-222, and glutamine 226 each bind AMP; these read ELA and GFPR. An LID 1 region spans residues 256–266; the sequence is KRAEQQGRPDD. Arginine 257 is a binding site for ATP. Residues arginine 263 and arginine 274 each coordinate AMP. Residue 386–391 participates in ATP binding; the sequence is GSGKGT. The NMP 2 stretch occupies residues 406 to 435; the sequence is STGELLRQELTSESERSKLIRDIMERGDLV. Residues threonine 407, arginine 412, 433–435, 462–465, and glutamine 469 contribute to the AMP site; these read DLV and GYPR. The segment at 499–509 is LID 2; sequence QRSQSSQRGED. An ATP-binding site is contributed by arginine 500. Residues arginine 506 and arginine 517 each coordinate AMP. Residue glycine 545 coordinates ATP.

It belongs to the adenylate kinase family. As to quaternary structure, monomer. Interacts with YWHAZ. As to expression, brain specific.

Its subcellular location is the cytoplasm. The catalysed reaction is AMP + ATP = 2 ADP. It carries out the reaction a 2'-deoxyribonucleoside 5'-diphosphate + ATP = a 2'-deoxyribonucleoside 5'-triphosphate + ADP. The enzyme catalyses a ribonucleoside 5'-diphosphate + ATP = a ribonucleoside 5'-triphosphate + ADP. Its function is as follows. Nucleoside monophosphate (NMP) kinase that catalyzes the reversible transfer of the terminal phosphate group between nucleoside triphosphates and monophosphates. Active on AMP and dAMP with ATP as a donor. When GTP is used as phosphate donor, the enzyme phosphorylates AMP, CMP, and to a small extent dCMP. Also displays broad nucleoside diphosphate kinase activity. This chain is Adenylate kinase isoenzyme 5 (Ak5), found in Mus musculus (Mouse).